Here is a 687-residue protein sequence, read N- to C-terminus: Ribonuclease E (687 aa).

An S1 motif domain is found at 35–117 (GDIYLGVVEN…LTGNITLPGR (83 aa)). Mg(2+) contacts are provided by aspartate 296 and aspartate 339. Residues cysteine 397 and cysteine 400 each contribute to the Zn(2+) site. A disordered region spans residues 650–687 (PIKLTETMEESEVNAASTANRRRRRRSSASDSDTGEDS). The C4 Arg-rich motif, necessary and sufficient to confer PNPase binding on another protein motif lies at 670 to 678 (RRRRRRSSA).

It belongs to the RNase E/G family. As to quaternary structure, may form homodimers or higher order multimers. Interacts with polynucleotide phosphorylase (PNPase, pnp) via the C4 Arg-rich motif (residues 670-678). A homotetramer formed by a dimer of dimers. Mg(2+) is required as a cofactor. Zn(2+) serves as cofactor.

Its subcellular location is the cytoplasm. It carries out the reaction Endonucleolytic cleavage of single-stranded RNA in A- and U-rich regions.. Its function is as follows. Endoribonuclease that plays a central role in rRNA and tRNA processing and mRNA decay. Has been shown to act on 9S rRNA (the precursor of 5S rRNA). This chain is Ribonuclease E, found in Nostoc sp. (strain PCC 7120 / SAG 25.82 / UTEX 2576).